Here is a 655-residue protein sequence, read N- to C-terminus: p-hydroxybenzoic acid efflux pump subunit AaeB (655 aa).

Transmembrane regions (helical) follow at residues phenylalanine 13–leucine 33, tryptophan 38–proline 58, leucine 69–isoleucine 89, leucine 93–valine 113, tryptophan 121–leucine 141, glutamate 152–isoleucine 172, leucine 370–valine 390, phenylalanine 407–proline 427, glutamine 431–valine 451, leucine 459–phenylalanine 479, and phenylalanine 482–leucine 502.

Belongs to the aromatic acid exporter ArAE (TC 2.A.85) family.

The protein resides in the cell inner membrane. Functionally, forms an efflux pump with AaeA. Could function as a metabolic relief valve, allowing to eliminate certain compounds when they accumulate to high levels in the cell. In Enterobacter cloacae subsp. cloacae (strain ATCC 13047 / DSM 30054 / NBRC 13535 / NCTC 10005 / WDCM 00083 / NCDC 279-56), this protein is p-hydroxybenzoic acid efflux pump subunit AaeB.